A 191-amino-acid chain; its full sequence is dCTP deaminase, dUMP-forming (191 aa).

DCTP-binding positions include 101 to 106, D119, 127 to 129, Q148, Y162, and Q174; these read KSSLGR and TLE. Residue E129 is the Proton donor/acceptor of the active site. The tract at residues 169–191 is disordered; the sequence is SRYQGQRGPTASRSFQNFHRTQV. The segment covering 171–191 has biased composition (polar residues); it reads YQGQRGPTASRSFQNFHRTQV.

The protein belongs to the dCTP deaminase family. As to quaternary structure, homotrimer.

The enzyme catalyses dCTP + 2 H2O = dUMP + NH4(+) + diphosphate. It functions in the pathway pyrimidine metabolism; dUMP biosynthesis; dUMP from dCTP: step 1/1. Its function is as follows. Bifunctional enzyme that catalyzes both the deamination of dCTP to dUTP and the hydrolysis of dUTP to dUMP without releasing the toxic dUTP intermediate. The sequence is that of dCTP deaminase, dUMP-forming from Streptomyces griseus subsp. griseus (strain JCM 4626 / CBS 651.72 / NBRC 13350 / KCC S-0626 / ISP 5235).